Reading from the N-terminus, the 453-residue chain is GTPase Der (453 aa).

2 consecutive EngA-type G domains span residues 3–167 (FTLA…PAQT) and 187–360 (IKVA…AVWN). GTP-binding positions include 9–16 (GRPNVGKS), 56–60 (DTAGL), 119–122 (NKSE), 193–200 (GRPNAGKS), 240–244 (DTAGL), and 305–308 (NKSD). The region spanning 361–445 (TRIPTNPLNR…PIRLTLREKG (85 aa)) is the KH-like domain.

Belongs to the TRAFAC class TrmE-Era-EngA-EngB-Septin-like GTPase superfamily. EngA (Der) GTPase family. In terms of assembly, associates with the 50S ribosomal subunit.

Functionally, GTPase that plays an essential role in the late steps of ribosome biogenesis. This Azorhizobium caulinodans (strain ATCC 43989 / DSM 5975 / JCM 20966 / LMG 6465 / NBRC 14845 / NCIMB 13405 / ORS 571) protein is GTPase Der.